Reading from the N-terminus, the 413-residue chain is ATP phosphoribosyltransferase regulatory subunit (413 aa).

A disordered region spans residues 1-21 (MRSRAARKFSTTPGTRDVLPP).

It belongs to the class-II aminoacyl-tRNA synthetase family. HisZ subfamily. As to quaternary structure, heteromultimer composed of HisG and HisZ subunits.

It is found in the cytoplasm. It participates in amino-acid biosynthesis; L-histidine biosynthesis; L-histidine from 5-phospho-alpha-D-ribose 1-diphosphate: step 1/9. Required for the first step of histidine biosynthesis. May allow the feedback regulation of ATP phosphoribosyltransferase activity by histidine. This is ATP phosphoribosyltransferase regulatory subunit from Rubrobacter xylanophilus (strain DSM 9941 / JCM 11954 / NBRC 16129 / PRD-1).